The primary structure comprises 252 residues: Trans-aconitate 2-methyltransferase (252 aa).

Belongs to the methyltransferase superfamily. Tam family.

The protein localises to the cytoplasm. It carries out the reaction trans-aconitate + S-adenosyl-L-methionine = (E)-3-(methoxycarbonyl)pent-2-enedioate + S-adenosyl-L-homocysteine. Its function is as follows. Catalyzes the S-adenosylmethionine monomethyl esterification of trans-aconitate. The protein is Trans-aconitate 2-methyltransferase of Escherichia coli O6:K15:H31 (strain 536 / UPEC).